The chain runs to 375 residues: MIQPQSVGAVVPQRAHFAEPLPLRSGDALPEYELLYETYGELNAARSNAVLVCHALSGSHHVAGHYADDPGNIGWWDNLVGPGKPLDTRKFFVIGVNNLGGCHGTTGPASINPASGKPWGADFPFVTVEDWVAAQARLADRLGIERFAAVVGGSLGGMQALSWTLQYPERIGHAVLVASAPRLTAQNIAFNEVARQAILSDPDFHGGHYYEHGVVPARGLKLARMLGHITYLSDDAMADKFGRTLRHGKAVYSYDVEFEIESYLRYQGDKFAGFFDANTYLLTTKALDYFDPAFEHGGILRAALARASADFLVVSFSTDWRFSPARSREIVYSLLHNRRNVSYAEIESDAGHDSFLLDDAHYHELLAAYFDRIEV.

Residues 48–358 (NAVLVCHALS…DAGHDSFLLD (311 aa)) enclose the AB hydrolase-1 domain. The active-site Nucleophile is the Ser-154. Arg-224 provides a ligand contact to substrate. Catalysis depends on residues Asp-319 and His-352. Asp-353 contacts substrate.

Belongs to the AB hydrolase superfamily. MetX family. As to quaternary structure, homodimer.

The protein resides in the cytoplasm. It catalyses the reaction L-homoserine + succinyl-CoA = O-succinyl-L-homoserine + CoA. It participates in amino-acid biosynthesis; L-methionine biosynthesis via de novo pathway; O-succinyl-L-homoserine from L-homoserine: step 1/1. In terms of biological role, transfers a succinyl group from succinyl-CoA to L-homoserine, forming succinyl-L-homoserine. The chain is Homoserine O-succinyltransferase from Aromatoleum aromaticum (strain DSM 19018 / LMG 30748 / EbN1) (Azoarcus sp. (strain EbN1)).